The following is a 487-amino-acid chain: 1-aminocyclopropane-1-carboxylate synthase 1 (487 aa).

Position 286 is an N6-(pyridoxal phosphate)lysine (lysine 286).

Belongs to the class-I pyridoxal-phosphate-dependent aminotransferase family. In terms of assembly, homodimer. The cofactor is pyridoxal 5'-phosphate.

It catalyses the reaction S-adenosyl-L-methionine = 1-aminocyclopropane-1-carboxylate + S-methyl-5'-thioadenosine + H(+). It functions in the pathway alkene biosynthesis; ethylene biosynthesis via S-adenosyl-L-methionine; ethylene from S-adenosyl-L-methionine: step 1/2. Its function is as follows. Catalyzes the formation of 1-aminocyclopropane-1-carboxylate, a direct precursor of ethylene in higher plants. This chain is 1-aminocyclopropane-1-carboxylate synthase 1 (ACC1), found in Oryza sativa subsp. indica (Rice).